A 445-amino-acid chain; its full sequence is Trigger factor (445 aa).

One can recognise a PPIase FKBP-type domain in the interval 172 to 257 (GDQVVIDFVG…VKSVNWAHMP (86 aa)).

Belongs to the FKBP-type PPIase family. Tig subfamily.

Its subcellular location is the cytoplasm. The catalysed reaction is [protein]-peptidylproline (omega=180) = [protein]-peptidylproline (omega=0). Involved in protein export. Acts as a chaperone by maintaining the newly synthesized protein in an open conformation. Functions as a peptidyl-prolyl cis-trans isomerase. This is Trigger factor from Polynucleobacter asymbioticus (strain DSM 18221 / CIP 109841 / QLW-P1DMWA-1) (Polynucleobacter necessarius subsp. asymbioticus).